Reading from the N-terminus, the 448-residue chain is Adenylosuccinate synthetase 1 (448 aa).

Residues 22-28 (GDEGKGK) and 50-52 (GHT) each bind GTP. Aspartate 23 acts as the Proton acceptor in catalysis. Mg(2+) is bound by residues aspartate 23 and glycine 50. IMP-binding positions include 23-26 (DEGK), 48-51 (NAGH), threonine 139, arginine 153, glutamine 234, threonine 249, and arginine 321. Residue histidine 51 is the Proton donor of the active site. 317–323 (SVTGRPR) contributes to the substrate binding site. Residues arginine 323, 349-351 (KLD), and 431-433 (STG) contribute to the GTP site.

This sequence belongs to the adenylosuccinate synthetase family. In terms of assembly, homodimer. Mg(2+) serves as cofactor.

Its subcellular location is the cytoplasm. It carries out the reaction IMP + L-aspartate + GTP = N(6)-(1,2-dicarboxyethyl)-AMP + GDP + phosphate + 2 H(+). Its pathway is purine metabolism; AMP biosynthesis via de novo pathway; AMP from IMP: step 1/2. Functionally, plays an important role in the de novo pathway of purine nucleotide biosynthesis. Catalyzes the first committed step in the biosynthesis of AMP from IMP. In Burkholderia lata (strain ATCC 17760 / DSM 23089 / LMG 22485 / NCIMB 9086 / R18194 / 383), this protein is Adenylosuccinate synthetase 1.